Consider the following 81-residue polypeptide: Protein Vpu (81 aa).

Residues M1 to L7 lie on the Extracellular side of the membrane. The chain crosses the membrane as a helical span at residues A8 to I28. Residues E29–L81 are Cytoplasmic-facing. Phosphoserine; by host CK2 occurs at positions 53 and 57.

The protein belongs to the HIV-1 VPU protein family. Homopentamer. Interacts with host CD4 and BRTC; these interactions induce proteasomal degradation of CD4. Interacts with host BST2; this interaction leads to the degradation of host BST2. Interacts with host FBXW11. Interacts with host AP1M1; this interaction plays a role in the mistrafficking and subsequent degradation of host BST2. Interacts with host RANBP2; this interaction allows Vpu to down-regulate host BLM sumoylation. In terms of processing, phosphorylated by host CK2. This phosphorylation is necessary for interaction with human BTRC and degradation of CD4.

The protein localises to the host membrane. Ion channel activity is inhibited by hexamethylene amiloride in vitro. Enhances virion budding by targeting host CD4 and Tetherin/BST2 to proteasome degradation. Degradation of CD4 prevents any unwanted premature interactions between viral Env and its host receptor CD4 in the endoplasmic reticulum. Degradation of antiretroviral protein Tetherin/BST2 is important for virion budding, as BST2 tethers new viral particles to the host cell membrane. Mechanistically, Vpu bridges either CD4 or BST2 to BTRC, a substrate recognition subunit of the Skp1/Cullin/F-box protein E3 ubiquitin ligase, induces their ubiquitination and subsequent proteasomal degradation. The alteration of the E3 ligase specificity by Vpu seems to promote the degradation of host IKBKB, leading to NF-kappa-B down-regulation and subsequent apoptosis. Acts as a viroporin that forms an oligomeric ion channel in membranes. Modulates the host DNA repair mechanisms to promote degradation of nuclear viral cDNA in cells that are already productively infected in order to suppress immune sensing and proviral hyper-integration (superinfection). Manipulates PML-NBs and modulates SUMOylation of host BLM protein thereby enhancing its DNA-end processing activity toward viral unintegrated linear DNA. Also inhibits RAD52-mediated homologous repair of viral cDNA, preventing the generation of dead-end circular forms of single copies of the long terminal repeat and permitting sustained nucleolytic attack. The protein is Protein Vpu of Homo sapiens (Human).